Consider the following 1274-residue polypeptide: Myosin-1 (1274 aa).

Residues 1 to 28 (MAPSKKAGKKGAVGGFLSGASKPQKVQK) are disordered. Residues 41–721 (AGVPDMTLLS…TLFYLEGERD (681 aa)) form the Myosin motor domain. Residue 134–141 (GESGAGKT) participates in ATP binding. Serine 363 carries the phosphoserine modification. The segment at 410–492 (VIGVLDIYGF…AGIFATLNDA (83 aa)) is actin-binding. IQ domains lie at 725–745 (HTMA…KHEA) and 746–771 (ATKI…YGHQ). A TH1 domain is found at 779–969 (RRRFSLLGMR…TIQVGSGEPP (191 aa)). 3 disordered regions span residues 951–1029 (RGDA…PVVT), 1042–1071 (ARAP…PKEF), and 1116–1248 (PSNY…QVAQ). Over residues 957-974 (KSHTIQVGSGEPPNSLSN) the composition is skewed to polar residues. Positions 1042 to 1053 (ARAPPSIPGRAA) are enriched in low complexity. Pro residues-rich tracts occupy residues 1054–1067 (APPP…PAGP) and 1126–1138 (APPP…PPSR). The region spanning 1067–1125 (PPKEFYKALYNFTGQEGEMNLVKGEEVEVKEKDDNGWWMVVKNGQEGWAPSNYLKKVEQ) is the SH3 domain. Composition is skewed to low complexity over residues 1139-1157 (PVAA…PAVT) and 1170-1226 (AASA…IGGK).

It belongs to the TRAFAC class myosin-kinesin ATPase superfamily. Myosin family. Post-translationally, phosphorylation of the TEDS site (Ser-363) is required for the polarization of the actin cytoskeleton. Phosphorylation probably activates the myosin-I ATPase activity.

The protein localises to the cytoplasm. Its subcellular location is the cytoskeleton. The protein resides in the actin patch. Its function is as follows. Type-I myosin implicated in the organization of the actin cytoskeleton. Required for proper actin cytoskeleton polarization. At the cell cortex, assembles in patch-like structures together with proteins from the actin-polymerizing machinery and promotes actin assembly. Functions as actin nucleation-promoting factor (NPF) for the Arp2/3 complex. The protein is Myosin-1 (MYO1) of Cryptococcus neoformans var. neoformans serotype D (strain B-3501A) (Filobasidiella neoformans).